We begin with the raw amino-acid sequence, 161 residues long: Transcriptional regulator MraZ (161 aa).

SpoVT-AbrB domains are found at residues 7–55 (RYTN…GPAF) and 84–127 (SAEL…EPGA).

Belongs to the MraZ family. In terms of assembly, forms oligomers.

It localises to the cytoplasm. Its subcellular location is the nucleoid. The polypeptide is Transcriptional regulator MraZ (Parvibaculum lavamentivorans (strain DS-1 / DSM 13023 / NCIMB 13966)).